Reading from the N-terminus, the 138-residue chain is Large ribosomal subunit protein uL16 (138 aa).

The span at 1 to 16 (MLIPRKVAHRKQHHPG) shows a compositional bias: basic residues. The tract at residues 1–24 (MLIPRKVAHRKQHHPGRTGAAKGG) is disordered.

Belongs to the universal ribosomal protein uL16 family. As to quaternary structure, part of the 50S ribosomal subunit.

Binds 23S rRNA and is also seen to make contacts with the A and possibly P site tRNAs. This Frankia alni (strain DSM 45986 / CECT 9034 / ACN14a) protein is Large ribosomal subunit protein uL16.